The sequence spans 149 residues: MRIIATNKKAYTDYIIDETYEAGIVLVGTEVKSLREHGASFKDSFCRVKEGEIWLLNLHIPPYQHGNIYNHDPERPRKLLLHKKEIDRIWSKLKLEGYTVIPTKIYFNNQGKVKVEIAIAKGKKSYDKREEIKKKETQKRIKEYLKYNR.

It belongs to the SmpB family.

The protein localises to the cytoplasm. In terms of biological role, required for rescue of stalled ribosomes mediated by trans-translation. Binds to transfer-messenger RNA (tmRNA), required for stable association of tmRNA with ribosomes. tmRNA and SmpB together mimic tRNA shape, replacing the anticodon stem-loop with SmpB. tmRNA is encoded by the ssrA gene; the 2 termini fold to resemble tRNA(Ala) and it encodes a 'tag peptide', a short internal open reading frame. During trans-translation Ala-aminoacylated tmRNA acts like a tRNA, entering the A-site of stalled ribosomes, displacing the stalled mRNA. The ribosome then switches to translate the ORF on the tmRNA; the nascent peptide is terminated with the 'tag peptide' encoded by the tmRNA and targeted for degradation. The ribosome is freed to recommence translation, which seems to be the essential function of trans-translation. The sequence is that of SsrA-binding protein from Fervidobacterium nodosum (strain ATCC 35602 / DSM 5306 / Rt17-B1).